The chain runs to 159 residues: Ribosomal RNA large subunit methyltransferase H (159 aa).

Residues Leu-76, Gly-108, and Phe-127–Phe-132 each bind S-adenosyl-L-methionine.

This sequence belongs to the RNA methyltransferase RlmH family. Homodimer.

The protein resides in the cytoplasm. The catalysed reaction is pseudouridine(1915) in 23S rRNA + S-adenosyl-L-methionine = N(3)-methylpseudouridine(1915) in 23S rRNA + S-adenosyl-L-homocysteine + H(+). Functionally, specifically methylates the pseudouridine at position 1915 (m3Psi1915) in 23S rRNA. The chain is Ribosomal RNA large subunit methyltransferase H from Oceanobacillus iheyensis (strain DSM 14371 / CIP 107618 / JCM 11309 / KCTC 3954 / HTE831).